A 47-amino-acid chain; its full sequence is Defensin Ec-AMP-D1 (47 aa).

Disulfide bonds link cysteine 3–cysteine 47, cysteine 14–cysteine 34, cysteine 20–cysteine 41, and cysteine 24–cysteine 43.

In terms of biological role, has antifungal activity. Inhibits spore germination in F.graminearum (IC(50)=15 ug/ml), F.oxysporum (IC(50)=102 ug/ml), F.verticillioides (IC(50)=8.5 ug/ml) and D.maydis (IC(50)=12.5 ug/ml), but not in C.graminicola, B.cinerea and H.sativum at concentrations below 30 ug/ml. Inhibits hyphal development in P.infestans (IC(50)=25.5 ug/ml), but not release of zoospores. At concentrations above 100 ug/ml, induces morphological changes such as lysis of hyphae and sporangia in P.infestans. The polypeptide is Defensin Ec-AMP-D1 (Echinochloa crus-galli (Barnyard grass)).